Consider the following 519-residue polypeptide: Aldehyde dehydrogenase, mitochondrial (519 aa).

The N-terminal 19 residues, 1–19, are a transit peptide targeting the mitochondrion; it reads MLRAALSTARRGPRLSRLL. The short motif at 12–26 is the SIFI-degron element; the sequence is GPRLSRLLSAAATSA. 4 positions are modified to N6-acetyllysine: Lys-54, Lys-75, Lys-80, and Lys-161. Residue 264-269 coordinates NAD(+); that stretch reads GSTEVG. The active-site Proton acceptor is Glu-287. Cys-321 acts as the Nucleophile in catalysis. Residues Lys-370, Lys-377, Lys-385, Lys-409, Lys-428, Lys-430, Lys-443, and Lys-453 each carry the N6-acetyllysine modification.

Belongs to the aldehyde dehydrogenase family. Homotetramer. Post-translationally, in response to mitochondrial stress, the precursor protein is ubiquitinated by the SIFI complex in the cytoplasm before mitochondrial import, leading to its degradation. Within the SIFI complex, UBR4 initiates ubiquitin chain that are further elongated or branched by KCMF1.

It localises to the mitochondrion matrix. It carries out the reaction an aldehyde + NAD(+) + H2O = a carboxylate + NADH + 2 H(+). Its pathway is alcohol metabolism; ethanol degradation; acetate from ethanol: step 2/2. Its function is as follows. Required for clearance of cellular formaldehyde, a cytotoxic and carcinogenic metabolite that induces DNA damage. The chain is Aldehyde dehydrogenase, mitochondrial (Aldh2) from Rattus norvegicus (Rat).